A 135-amino-acid chain; its full sequence is Congerin-1 (135 aa).

Ser1 is modified (N-acetylserine). Residues 3–135 (GLQVKNFDFT…GDARLTLVKE (133 aa)) enclose the Galectin domain. An a beta-D-galactoside-binding site is contributed by 70-76 (WETEQRS).

Homodimer.

This protein binds beta-galactoside. Its physiological function is not yet known. In Conger myriaster (Conger eel), this protein is Congerin-1.